A 1312-amino-acid polypeptide reads, in one-letter code: uncharacterized protein (1312 aa).

The N-terminal stretch at 1-20 (MRNNLIYTMFLSCLHFETFC) is a signal peptide. Low complexity predominate over residues 299–344 (TTTSSSTMLSSTTLLTTETETRESSSTGSTQTTTPSTEPSTTITTP). Disordered stretches follow at residues 299–503 (TTTS…TTTY), 565–609 (EITS…PTGG), 645–692 (KETR…PTGG), 749–775 (SSSSKFSITPTPTPSSGTTTYNWPTGG), 812–864 (KTRT…GGTT), 899–942 (KTRT…PTGG), 1048–1079 (KTRTETTSDAQGCKATSTTQTPTTFNWPTGGT), and 1114–1165 (NTTR…TLET). A compositionally biased stretch (polar residues) spans 345–357 (MEQSSTVSSVQKT). Low complexity predominate over residues 365–503 (SSSTTVPTSA…STPATPTTTY (139 aa)). Residues 565–574 (EITSDAEGCK) are compositionally biased toward basic and acidic residues. Over residues 576 to 609 (TSSTPTPSSTSVHSTTATPSTTPGTTTYNWPTGG) the composition is skewed to low complexity. The segment covering 645 to 659 (KETRTETTTDADGCK) has biased composition (basic and acidic residues). A compositionally biased stretch (low complexity) spans 660–692 (KTSSTSSSTPSLKHSTTPTPTPGTTTYNWPTGG). Residues 813–825 (TRTETTTDAEGCK) show a composition bias toward basic and acidic residues. The segment covering 826–864 (KTSSTSKISTTPTSPTSSKPTPTSTSMTTTYNWPTGGTT) has biased composition (low complexity). The span at 899 to 908 (KTRTETTTDA) shows a compositional bias: polar residues. Residues 914–942 (TSSTSLKPTSPSSSTASPPTTTYNWPTGG) show a composition bias toward low complexity. Over residues 1048 to 1057 (KTRTETTSDA) the composition is skewed to polar residues. Positions 1063 to 1076 (TSTTQTPTTFNWPT) are enriched in low complexity. Positions 1114 to 1123 (NTTRTETTSD) are enriched in polar residues. Positions 1130 to 1154 (TSSGTTSTMSPGTTGGTTVSRTTNS) are enriched in low complexity. Positions 1155–1164 (NNPIDSSTLE) are enriched in polar residues. Positions 1239 to 1306 (ATCSSLNLNL…WSGTPEKCVA (68 aa)) constitute a Sushi domain. 2 disulfides stabilise this stretch: Cys1241–Cys1291 and Cys1273–Cys1304.

It is found in the secreted. This is an uncharacterized protein from Caenorhabditis elegans.